A 77-amino-acid chain; its full sequence is DNA-directed RNA polymerase subunit epsilon (77 aa).

The protein belongs to the RNA polymerase subunit epsilon family. RNAP is composed of a core of 2 alpha, a beta and a beta' subunit. The core is associated with a delta subunit, and at least one of epsilon or omega. When a sigma factor is associated with the core the holoenzyme is formed, which can initiate transcription.

It catalyses the reaction RNA(n) + a ribonucleoside 5'-triphosphate = RNA(n+1) + diphosphate. A non-essential component of RNA polymerase (RNAP). The chain is DNA-directed RNA polymerase subunit epsilon from Streptococcus pneumoniae (strain Hungary19A-6).